A 381-amino-acid chain; its full sequence is Alkanesulfonate monooxygenase (381 aa).

The protein belongs to the SsuD family. As to quaternary structure, homotetramer.

The enzyme catalyses an alkanesulfonate + FMNH2 + O2 = an aldehyde + FMN + sulfite + H2O + 2 H(+). Catalyzes the desulfonation of aliphatic sulfonates. The chain is Alkanesulfonate monooxygenase from Escherichia coli (strain SMS-3-5 / SECEC).